The following is a 1202-amino-acid chain: DNA-directed RNA polymerase subunit beta (1202 aa).

It belongs to the RNA polymerase beta chain family. The RNAP catalytic core consists of 2 alpha, 1 beta, 1 beta' and 1 omega subunit. When a sigma factor is associated with the core the holoenzyme is formed, which can initiate transcription.

The catalysed reaction is RNA(n) + a ribonucleoside 5'-triphosphate = RNA(n+1) + diphosphate. Its function is as follows. DNA-dependent RNA polymerase catalyzes the transcription of DNA into RNA using the four ribonucleoside triphosphates as substrates. The polypeptide is DNA-directed RNA polymerase subunit beta (Mycoplasmopsis synoviae (strain 53) (Mycoplasma synoviae)).